We begin with the raw amino-acid sequence, 305 residues long: tRNA dimethylallyltransferase (305 aa).

8–15 (GPTASGKT) lines the ATP pocket. 10–15 (TASGKT) lines the substrate pocket. An interaction with substrate tRNA region spans residues 33 to 36 (DSQQ).

This sequence belongs to the IPP transferase family. As to quaternary structure, monomer. Requires Mg(2+) as cofactor.

The enzyme catalyses adenosine(37) in tRNA + dimethylallyl diphosphate = N(6)-dimethylallyladenosine(37) in tRNA + diphosphate. Catalyzes the transfer of a dimethylallyl group onto the adenine at position 37 in tRNAs that read codons beginning with uridine, leading to the formation of N6-(dimethylallyl)adenosine (i(6)A). This is tRNA dimethylallyltransferase from Anaeromyxobacter sp. (strain K).